We begin with the raw amino-acid sequence, 143 residues long: Antitumor antibiotic C-1027 apoprotein (143 aa).

An N-terminal signal peptide occupies residues 1-33 (MSLRHMSRRASRFGVVAVASIGLAAAAQSVAFA). 2 disulfide bridges follow: Cys69/Cys78 and Cys119/Cys124.

Belongs to the neocarzinostatin family.

Functionally, binds non-covalently to a chromophore which is the cytotoxic and mutagenic component of the antibiotic. The chromophore binds to DNA as a weak intercalator and causes single- and double-strand breaks. The sequence is that of Antitumor antibiotic C-1027 apoprotein (cagA) from Streptomyces globisporus.